The following is a 923-amino-acid chain: Isoleucine--tRNA ligase (923 aa).

The short motif at 57 to 67 (PYANGHIHIGH) is the 'HIGH' region element. Residue glutamate 560 coordinates L-isoleucyl-5'-AMP. The 'KMSKS' region signature appears at 601–605 (KMSKS). Lysine 604 contributes to the ATP binding site. Cysteine 895, cysteine 898, cysteine 915, and cysteine 918 together coordinate Zn(2+).

This sequence belongs to the class-I aminoacyl-tRNA synthetase family. IleS type 1 subfamily. In terms of assembly, monomer. It depends on Zn(2+) as a cofactor.

The protein resides in the cytoplasm. It carries out the reaction tRNA(Ile) + L-isoleucine + ATP = L-isoleucyl-tRNA(Ile) + AMP + diphosphate. Catalyzes the attachment of isoleucine to tRNA(Ile). As IleRS can inadvertently accommodate and process structurally similar amino acids such as valine, to avoid such errors it has two additional distinct tRNA(Ile)-dependent editing activities. One activity is designated as 'pretransfer' editing and involves the hydrolysis of activated Val-AMP. The other activity is designated 'posttransfer' editing and involves deacylation of mischarged Val-tRNA(Ile). This chain is Isoleucine--tRNA ligase, found in Geobacter sulfurreducens (strain ATCC 51573 / DSM 12127 / PCA).